The sequence spans 438 residues: Chaperone SurA (438 aa).

Positions 1–28 (MKTMNPYIRHLILLICCLGGMLAQPLSA) are cleaved as a signal peptide. PpiC domains are found at residues 181-282 (EEEY…KLVS) and 292-390 (VQQT…QVLE).

The protein resides in the periplasm. It carries out the reaction [protein]-peptidylproline (omega=180) = [protein]-peptidylproline (omega=0). Functionally, chaperone involved in the correct folding and assembly of outer membrane proteins. Recognizes specific patterns of aromatic residues and the orientation of their side chains, which are found more frequently in integral outer membrane proteins. May act in both early periplasmic and late outer membrane-associated steps of protein maturation. This Dechloromonas aromatica (strain RCB) protein is Chaperone SurA.